The chain runs to 418 residues: MKFAIESISKNSGRLGQLRIKDGGPDFKTPLLLQTTKGGSIPWLSADVFESHVSQKPQVLQFTLSTMDHMTEALTHWNSGGGRGLSDYVGLPGHLNILMLRDPCETTPSGGNDRDILPLFTRRGKESLSSERYMEMVASFKPDFYEGLCDADTNLESAKKRIQKSVDRTEKFMHYIYEHRGKVNSTLLAPIVGGYNTFARTQSIKHAREQPAGSYGGYIFEGFHTNGLSATTLDTSKLLPIVEHCVKQLEEDKPRLMPGAYTPLTILELIRQGIDMFDSSYAYCASLNFKALTFSFVQDAVEHAPFLDITDEAIKEDFTPPLSNCSCLTCQKHTRAYLHHLYKTNELLGPILLIVHNLHHYMAFFEKIRESVARDELPRLTEFVRNQNGKTQVDYSIAANTKVISKAAMGKGFAAAAV.

C325, C327, C330, and H356 together coordinate Zn(2+).

This sequence belongs to the queuine tRNA-ribosyltransferase family. QTRT2 subfamily. In terms of assembly, heterodimer of a catalytic subunit and an accessory subunit. Requires Zn(2+) as cofactor.

It localises to the cytoplasm. In terms of biological role, non-catalytic subunit of the queuine tRNA-ribosyltransferase (TGT) that catalyzes the base-exchange of a guanine (G) residue with queuine (Q) at position 34 (anticodon wobble position) in tRNAs with GU(N) anticodons (tRNA-Asp, -Asn, -His and -Tyr), resulting in the hypermodified nucleoside queuosine (7-(((4,5-cis-dihydroxy-2-cyclopenten-1-yl)amino)methyl)-7-deazaguanosine). The sequence is that of Queuine tRNA-ribosyltransferase accessory subunit 2 from Drosophila yakuba (Fruit fly).